The chain runs to 276 residues: SF-assemblin (276 aa).

The nonhelical region stretch occupies residues 1-31 (MSLRPFETPGGLSSLSPRRRDFSPTRPGTNG). The interval 1–37 (MSLRPFETPGGLSSLSPRRRDFSPTRPGTNGPSAKLE) is disordered. The rod stretch occupies residues 32-276 (PSAKLEHVTE…LQEGLKLVSA (245 aa)). A coiled-coil region spans residues 67–145 (LLQESLQRIE…LVRDERESRR (79 aa)).

It belongs to the SF-assemblin family.

The protein resides in the cytoplasm. It localises to the cytoskeleton. Major component of the striated microtubule-associated fibers (SMAFs; system-I-fibers). The polypeptide is SF-assemblin (Chlamydomonas reinhardtii (Chlamydomonas smithii)).